A 144-amino-acid polypeptide reads, in one-letter code: Endoribonuclease YbeY (144 aa).

Zn(2+)-binding residues include histidine 105, histidine 109, and aspartate 115.

It belongs to the endoribonuclease YbeY family. Zn(2+) is required as a cofactor.

It localises to the cytoplasm. Single strand-specific metallo-endoribonuclease involved in late-stage 70S ribosome quality control and in maturation of the 3' terminus of the 16S rRNA. The chain is Endoribonuclease YbeY from Chlorobium limicola (strain DSM 245 / NBRC 103803 / 6330).